The sequence spans 881 residues: Alanine--tRNA ligase (881 aa).

4 residues coordinate Zn(2+): H566, H570, C668, and H672.

This sequence belongs to the class-II aminoacyl-tRNA synthetase family. It depends on Zn(2+) as a cofactor.

The protein localises to the cytoplasm. It catalyses the reaction tRNA(Ala) + L-alanine + ATP = L-alanyl-tRNA(Ala) + AMP + diphosphate. Functionally, catalyzes the attachment of alanine to tRNA(Ala) in a two-step reaction: alanine is first activated by ATP to form Ala-AMP and then transferred to the acceptor end of tRNA(Ala). Also edits incorrectly charged Ser-tRNA(Ala) and Gly-tRNA(Ala) via its editing domain. This is Alanine--tRNA ligase from Frankia alni (strain DSM 45986 / CECT 9034 / ACN14a).